The sequence spans 289 residues: MSALANHSFVKMNGIGNEIVVLDLRDVKHVVTPDEARAVAARVPYDQLMVLQPPRLDGTEAFIRIYNNDGSESGACGNGMRCVVRQVFEKTGQASATFETRAGLLNCWQGPAPDLYTVDMGVPKFGWQEIPLAEEFRDTRYIELQIGPIDAPILHSPSVVNMGNPHAVFWVDGDVNSYDLERFGPLLENHPIFPERANITLAHIVDRDHITMRTWERGAGLTKACGSAACATAVAAARLKRANRIVQMTLPGGELTIEWRERDDHVLMTGTATFEFEGRFEPQLFASVA.

Substrate contacts are provided by Asn17, Gln47, and Asn67. The Proton donor role is filled by Cys76. Substrate is bound by residues 77–78 (GN), Asn164, Asn198, and 216–217 (ER). Cys225 functions as the Proton acceptor in the catalytic mechanism. Residue 226-227 (GS) coordinates substrate.

It belongs to the diaminopimelate epimerase family. Homodimer.

It is found in the cytoplasm. It catalyses the reaction (2S,6S)-2,6-diaminopimelate = meso-2,6-diaminopimelate. The protein operates within amino-acid biosynthesis; L-lysine biosynthesis via DAP pathway; DL-2,6-diaminopimelate from LL-2,6-diaminopimelate: step 1/1. Its function is as follows. Catalyzes the stereoinversion of LL-2,6-diaminopimelate (L,L-DAP) to meso-diaminopimelate (meso-DAP), a precursor of L-lysine and an essential component of the bacterial peptidoglycan. The sequence is that of Diaminopimelate epimerase from Bradyrhizobium sp. (strain BTAi1 / ATCC BAA-1182).